Consider the following 82-residue polypeptide: DNA-directed RNA polymerase subunit Rpo5 (82 aa).

It belongs to the archaeal Rpo5/eukaryotic RPB5 RNA polymerase subunit family. Part of the RNA polymerase complex.

It localises to the cytoplasm. It catalyses the reaction RNA(n) + a ribonucleoside 5'-triphosphate = RNA(n+1) + diphosphate. DNA-dependent RNA polymerase (RNAP) catalyzes the transcription of DNA into RNA using the four ribonucleoside triphosphates as substrates. This Thermococcus kodakarensis (strain ATCC BAA-918 / JCM 12380 / KOD1) (Pyrococcus kodakaraensis (strain KOD1)) protein is DNA-directed RNA polymerase subunit Rpo5.